A 76-amino-acid chain; its full sequence is Small ribosomal subunit protein bS18 (76 aa).

Belongs to the bacterial ribosomal protein bS18 family. As to quaternary structure, part of the 30S ribosomal subunit. Forms a tight heterodimer with protein bS6.

In terms of biological role, binds as a heterodimer with protein bS6 to the central domain of the 16S rRNA, where it helps stabilize the platform of the 30S subunit. This is Small ribosomal subunit protein bS18 from Xanthomonas euvesicatoria pv. vesicatoria (strain 85-10) (Xanthomonas campestris pv. vesicatoria).